Here is a 219-residue protein sequence, read N- to C-terminus: Transmembrane emp24 domain-containing protein 10 (219 aa).

An N-terminal signal peptide occupies residues 1-31; the sequence is MSGLSGPPTRRGPFPLALLLLFLLGPSLVLA. The interval 1-142 is required for interaction with STX17; it reads MSGLSGPPTR…KNYEEIAKVE (142 aa). Over 32 to 185 the chain is Lumenal; sequence ISFHLPINSR…RDTNESTNTR (154 aa). The 153-residue stretch at 41 to 193 folds into the GOLD domain; that stretch reads RKCLREEIHK…TRVLYFSIFS (153 aa). Residues arginine 171 and arginine 176 each carry the dimethylated arginine modification. Asparagine 179 carries an N-linked (GlcNAc...) asparagine glycan. A helical membrane pass occupies residues 186-206; the sequence is VLYFSIFSMFCLIGLATWQVF. The segment at 204–219 is interaction with COPG1; sequence QVFYLRRFFKAKKLIE. The Cytoplasmic segment spans residues 207 to 219; it reads YLRRFFKAKKLIE. The tract at residues 207–219 is interaction with ARF1 and IL1B; that stretch reads YLRRFFKAKKLIE. A COPII vesicle coat-binding motif is present at residues 211-212; that stretch reads FF. The short motif at 211 to 219 is the COPI vesicle coat-binding element; it reads FFKAKKLIE.

Belongs to the EMP24/GP25L family. Predominantly dimeric and to a lesser extent monomeric in the ER. Monomer and dimer in ERGIC and cis-Golgi network. Forms homooligomer (via GOLD domain); the assembly is promoted by direct binding with leaderless cargos and may form a protein channel that facilitates cargo entry into the ERGIC. Forms heterooligomeric complexes with other members of the p24 family such as TMED2, TMED7 and TMED9. Interacts (via GOLD domain) with TMED2 (via GOLD domain); the complex is required for export of TMED10 from the ER to the cis-Golgi network; the complex is proposed to be involved in cis-Golgi network dynamics and / or biogenesis. Associates with the COPI vesicle coat subunits (coatomer). Tetramerization of the cytoplasmic domain at the Golgi membrane in vitro; the complex is proposed to interact with COPI coatomer and induce budding of the vesicles. Interacts with COPG1; the interaction involves TMED10 homodimer. Interacts with ARF1 (GDP-bound); the interaction probably involves a TMED10 oligomer. Interacts with SEC23A, SEC24B, SEC24C and SEC24D components of the coat protein complex II/COPII, indicative of an association of TMED10 with the COPII vesicle coat. Interacts with CD59. Interacts with MPPE1/PGAP5; the complex might recruit and sort GPI-anchored proteins to the ER-exit site, or the interaction might lead to recycling of PGAP5 between the ER and the Golgi. Interacts with F2LR1/PAR2. Interacts with KDELR2/ERD2; the interaction is disrupted by KDELR2 ligand. Found in a complex composed at least of SURF4, TMED2 and TMED10. Associates with the presenilin-dependent gamma-secretase complex. Interacts with STX17; the interaction is direct. Interacts with IL-1; the interaction is direct. Interacts with RAB21 (active GTP-bound form); the interaction is indirect and regulates TMED10 abundance and localization at the Golgi.

It localises to the endoplasmic reticulum membrane. It is found in the endoplasmic reticulum-Golgi intermediate compartment membrane. The protein localises to the golgi apparatus membrane. The protein resides in the golgi apparatus. Its subcellular location is the cis-Golgi network membrane. It localises to the trans-Golgi network membrane. It is found in the cytoplasmic vesicle. The protein localises to the secretory vesicle membrane. The protein resides in the cell membrane. Its subcellular location is the melanosome. In terms of biological role, cargo receptor involved in protein vesicular trafficking and quality control in the endoplasmic reticulum (ER) and Golgi. The p24 protein family is a group of transmembrane proteins that bind coat protein complex I/COPI and coat protein complex II/COPII involved in vesicular trafficking between the membranes. Acts at the lumenal side for incorporation of secretory cargo molecules into transport vesicles and involved in vesicle coat formation at the cytoplasmic side. Mainly functions in the early secretory pathway and cycles between the ER, ER-Golgi intermediate compartment (ERGIC) and Golgi, mediating cargo transport through COPI and COPII-coated vesicles. In COPII vesicle-mediated anterograde transport, involved in the transport of GPI-anchored proteins by acting together with TMED2 as their cargo receptor; the function specifically implies SEC24C and SEC24D of the COPII vesicle coat and lipid raft-like microdomains of the ER. Recognizes GPI anchors structural remodeled in the ER by the GPI inositol-deacylase/PGAP1 and the metallophosphoesterase MPPE1/PGAP5. In COPI vesicle-mediated retrograde transport, involved in the biogenesis of COPI vesicles and vesicle coat recruitment. Involved in trafficking of amyloid beta A4 protein and soluble APP-beta release (independent from the modulation of gamma-secretase activity). Involved in the KDELR2-mediated retrograde transport of the toxin A subunit (CTX-A-K63)together with COPI and the COOH terminus of KDELR2. On Golgi membranes, acts as a primary receptor for ARF1-GDP, a GTP-binding protein involved in COPI-vesicle formation. Increases coatomer-dependent GTPase-activating activity of ARFGAP2 which mediates the hydrolysis of ARF1-bound GTP and therefore modulates protein trafficking from the Golgi apparatus. Involved in the exocytic trafficking of G protein-coupled receptors F2LR1/PAR2 (trypsin and tryspin-like enzyme receptor), OPRM1 (opioid receptor) and P2RY4 (UTD and UDP receptor) from the Golgi to the plasma membrane, thus contributing to receptor resensitization. In addition to its cargo receptor activity, may also act as a protein channel after oligomerization, facilitating the post-translational entry of leaderless cytoplasmic cargo into the ERGIC. Involved in the translocation into ERGIC, the vesicle entry and the secretion of leaderless cargos (lacking the secretion signal sequence), including the mature form of interleukin 1/IL-1 family members, the alpha-crystallin B chain HSPB5, the carbohydrate-binding proteins galectin-1/LGALS1 and galectin-3/LGALS3, the microtubule-associated protein Tau/MAPT, and the annexin A1/ANXA1; the translocation process is dependent on cargo protein unfolding and enhanced by chaperones HSP90AB1 and HSP90B1/GRP9. Could also associates with the presenilin-dependent gamma-secretase complex in order to regulate gamma-cleavages of the amyloid beta A4 protein to yield amyloid-beta 40/Abeta40. This chain is Transmembrane emp24 domain-containing protein 10 (TMED10), found in Pongo abelii (Sumatran orangutan).